We begin with the raw amino-acid sequence, 109 residues long: Spermidine export protein MdtI (109 aa).

4 helical membrane-spanning segments follow: residues 6-26, 36-56, 64-84, and 88-108; these read WIHG…NVLL, CYGI…SQAV, AYAL…WVLF, and LNPK…MIKF.

This sequence belongs to the drug/metabolite transporter (DMT) superfamily. Small multidrug resistance (SMR) (TC 2.A.7.1) family. MdtI subfamily. In terms of assembly, forms a complex with MdtJ.

Its subcellular location is the cell inner membrane. Its function is as follows. Catalyzes the excretion of spermidine. This Salmonella choleraesuis (strain SC-B67) protein is Spermidine export protein MdtI.